A 1395-amino-acid chain; its full sequence is Adventurous-gliding motility protein Z (1395 aa).

The 119-residue stretch at 4–122 (RVLIVESEHD…ELAALSHGIV (119 aa)) folds into the Response regulatory domain. Position 48 is a 4-aspartylphosphate (aspartate 48). 6 disordered regions span residues 137-172 (LNGT…AMTE), 874-893 (AAES…GLRS), 919-947 (EQHA…ARAH), 1212-1249 (AAES…AAKQ), 1287-1312 (RYKS…EDDE), and 1326-1395 (AAAA…ELDK). A coiled-coil region spans residues 213–911 (EGKIQILRDE…LEQTHGQLAA (699 aa)). 2 stretches are compositionally biased toward basic and acidic residues: residues 919-928 (EQHAHQESRK) and 1228-1249 (QKER…AAKQ). Low complexity-rich tracts occupy residues 1291–1306 (KSAT…AKPA) and 1326–1352 (AAAA…KKAP). Over residues 1382-1395 (EDDDWTALVDELDK) the composition is skewed to acidic residues.

In terms of assembly, interacts with MglA.

It is found in the cytoplasm. In terms of biological role, required for adventurous-gliding motility (A motility), in response to environmental signals sensed by the frz chemosensory system. Forms ordered clusters that span the cell length and that remain stationary relative to the surface across which the cells move, serving as anchor points (focal, transient adhesion sites) that allow the bacterium to move forward. Clusters disassemble at the lagging cell pole. This chain is Adventurous-gliding motility protein Z (aglZ), found in Myxococcus xanthus (strain DK1622).